Consider the following 361-residue polypeptide: Probable pectinesterase 50 (361 aa).

Positions 1 to 22 (MGYISMSVVAFLVVFASPVVLA) are cleaved as a signal peptide. Gln174 provides a ligand contact to substrate. Asp197 acts as the Proton donor in catalysis. Residue Asp218 is the Nucleophile of the active site. Arg275 and Trp277 together coordinate substrate.

Belongs to the pectinesterase family. As to expression, expressed in flower buds.

The protein localises to the secreted. It localises to the cell wall. It catalyses the reaction [(1-&gt;4)-alpha-D-galacturonosyl methyl ester](n) + n H2O = [(1-&gt;4)-alpha-D-galacturonosyl](n) + n methanol + n H(+). Its pathway is glycan metabolism; pectin degradation; 2-dehydro-3-deoxy-D-gluconate from pectin: step 1/5. Functionally, acts in the modification of cell walls via demethylesterification of cell wall pectin. The chain is Probable pectinesterase 50 (PME50) from Arabidopsis thaliana (Mouse-ear cress).